Here is a 508-residue protein sequence, read N- to C-terminus: Photosystem II CP47 reaction center protein (508 aa).

6 helical membrane passes run 21-36, 101-115, 140-156, 203-218, 237-252, and 457-472; these read SVHIMHTALVSGWAGS, IVFSGLCFLAAIWHW, GIHLFLSGVACFGFGAF, IAAGTLGILAGLFHLS, VLSSSIAAVFFAAFVV, and SFALLFFFGHIWHGAR.

The protein belongs to the PsbB/PsbC family. PsbB subfamily. As to quaternary structure, PSII is composed of 1 copy each of membrane proteins PsbA, PsbB, PsbC, PsbD, PsbE, PsbF, PsbH, PsbI, PsbJ, PsbK, PsbL, PsbM, PsbT, PsbX, PsbY, PsbZ, Psb30/Ycf12, at least 3 peripheral proteins of the oxygen-evolving complex and a large number of cofactors. It forms dimeric complexes. Binds multiple chlorophylls. PSII binds additional chlorophylls, carotenoids and specific lipids. serves as cofactor.

It is found in the plastid. The protein localises to the chloroplast thylakoid membrane. One of the components of the core complex of photosystem II (PSII). It binds chlorophyll and helps catalyze the primary light-induced photochemical processes of PSII. PSII is a light-driven water:plastoquinone oxidoreductase, using light energy to abstract electrons from H(2)O, generating O(2) and a proton gradient subsequently used for ATP formation. This Nymphaea alba (White water-lily) protein is Photosystem II CP47 reaction center protein.